A 191-amino-acid chain; its full sequence is Cell number regulator 1 (191 aa).

Residues 13–44 form a disordered region; the sequence is FSAGAPPTAPPPPAAYHQQQQQHGANMDTSRP. Residues 27–37 are compositionally biased toward low complexity; that stretch reads AYHQQQQQHGA. Residues 91–113 form a helical membrane-spanning segment; it reads IASGLVYGLICASTGMGCLYSCL.

This sequence belongs to the cornifelin family. As to expression, expressed in roots, coleoptiles, stalks and silks. Detected in leaves, apical meristems, immature ears and pericarps. Highest expression in coleoptiles and silks.

Its subcellular location is the membrane. Acts as a negative regulator of cell number. In Zea mays (Maize), this protein is Cell number regulator 1 (CNR1).